The sequence spans 449 residues: Heterogeneous nuclear ribonucleoprotein H (449 aa).

At M1 the chain carries N-acetylmethionine; in Heterogeneous nuclear ribonucleoprotein H; alternate. At M2 the chain carries N-acetylmethionine; in Heterogeneous nuclear ribonucleoprotein H, N-terminally processed. Positions 11-90 constitute an RRM 1 domain; sequence FVVKVRGLPW…RYVEVFKSNN (80 aa). S23 carries the phosphoserine modification. A Glycyl lysine isopeptide (Lys-Gly) (interchain with G-Cter in SUMO2) cross-link involves residue K35. S54 and S63 each carry phosphoserine. Glycyl lysine isopeptide (Lys-Gly) (interchain with G-Cter in SUMO2) cross-links involve residues K87 and K98. In terms of domain architecture, RRM 2 spans 111 to 188; sequence GFVRLRGLPF…RYIEIFKSSR (78 aa). R233 carries the post-translational modification Dimethylated arginine; alternate. R233 bears the Omega-N-methylarginine; alternate mark. The 1-1 repeat unit spans residues 234–249; the sequence is GAYGGGYGGYDDYNGY. A 2 X 16 AA Gly-rich approximate repeats region spans residues 234 to 433; the sequence is GAYGGGYGGY…YGGQSSMSGY (200 aa). Position 246 is a phosphotyrosine (Y246). One can recognise an RRM 3 domain in the interval 289-364; sequence HCVHMRGLPY…RYVELFLNST (76 aa). S310 is subject to Phosphoserine. 3 tandem repeats follow at residues 354–372, 374–392, and 418–433. Positions 354-392 are 2 X 19 AA perfect repeats; the sequence is HRYVELFLNSTAGASGGAYEHRYVELFLNSTAGASGGAY.

Part of a ternary complex containing FUBP2, PTBP1, PTBP2 and HNRNPH1. Identified in the spliceosome C complex. Interacts with IGF2BP1. Interacts with CUGBP1; the interaction is RNA-dependent. Interacts with MBNL1; the interaction in RNA-independent. Expressed ubiquitously.

It is found in the nucleus. Its subcellular location is the nucleoplasm. In terms of biological role, this protein is a component of the heterogeneous nuclear ribonucleoprotein (hnRNP) complexes which provide the substrate for the processing events that pre-mRNAs undergo before becoming functional, translatable mRNAs in the cytoplasm. Mediates pre-mRNA alternative splicing regulation. Inhibits, together with CUGBP1, insulin receptor (IR) pre-mRNA exon 11 inclusion in myoblast. Binds to the IR RNA. Binds poly(RG). The protein is Heterogeneous nuclear ribonucleoprotein H (HNRNPH1) of Homo sapiens (Human).